A 275-amino-acid polypeptide reads, in one-letter code: Apoptosis inhibitor 1 (275 aa).

BIR repeat units follow at residues 24–91 (LIER…CVYA) and 126–193 (PSAR…CYFV). Positions 163, 166, 183, and 190 each coordinate Zn(2+). An RING-type zinc finger spans residues 227–263 (CKVCLERQRDAVLLPCRHFCVCMQCYFALDGKCPTCR).

Its function is as follows. Acts by blocking cellular apoptosis rather than by preventing viral stimulation of apoptosis. In Orgyia pseudotsugata (Douglas-fir tussock moth), this protein is Apoptosis inhibitor 1 (IAP1).